Consider the following 532-residue polypeptide: Flavin-containing monooxygenase 1 (532 aa).

A2 bears the N-acetylalanine mark. The Lumenal segment spans residues 2 to 510; sequence AKRVAIVGAG…ARVVQESPSP (509 aa). FAD contacts are provided by residues 9 to 13, E32, 40 to 41, and 61 to 62; these read GAGVS, LW, and NS. NADP(+)-binding positions include 60 to 61 and 195 to 198; these read SN and SGTD. A helical transmembrane segment spans residues 511 to 531; that stretch reads FESFLKVFSFLALLVAIFLIF. Position 532 (L532) is a topological domain, cytoplasmic.

Belongs to the FMO family. It depends on FAD as a cofactor. Expressed mainly in fetal and adult liver.

It localises to the endoplasmic reticulum membrane. The enzyme catalyses hypotaurine + NADPH + O2 + H(+) = taurine + NADP(+) + H2O. The catalysed reaction is hypotaurine + NADH + O2 + H(+) = taurine + NAD(+) + H2O. It carries out the reaction trimethylamine + NADPH + O2 = trimethylamine N-oxide + NADP(+) + H2O. It catalyses the reaction N,N-dimethylaniline + NADPH + O2 + H(+) = N,N-dimethylaniline N-oxide + NADP(+) + H2O. In terms of biological role, broad spectrum monooxygenase that catalyzes the oxygenation of a wide variety of nitrogen- and sulfur-containing compounds including xenobiotics. Catalyzes the S-oxygenation of hypotaurine to produce taurine, an organic osmolyte involved in cell volume regulation as well as a variety of cytoprotective and developmental processes. In vitro, catalyzes the N-oxygenation of trimethylamine (TMA) to produce trimethylamine N-oxide (TMAO) and could therefore participate to the detoxification of this compound that is generated by the action of gut microbiota from dietary precursors such as choline, choline containing compounds, betaine or L-carnitine. This is Flavin-containing monooxygenase 1 from Homo sapiens (Human).